The primary structure comprises 813 residues: MEEISTPEGGVLVPISIETEVKRAYIDYSMSVIVSRALPDVRDGLKPVHRRILYAMEEKGLRFSGPTRKCAKIVGDVLGSFHPHGDASVYDALVRLGQDFSLRYPVIHPQGNFGTIGGDPPAAYRYTEAKMARIAESMVEDIKKETVSFVPNFDDSDVEPTVLPGRFPFLLANGSSGIAVGMTTNMPPHNLREIAAAISAYIENPNLSIQELCDCINGPDFPTGGIIFGKNGIRQSYETGRGKIVVRARFTIETDSKGRDTIIFTEVPYQVNTTMLVMRIGELARAKVIEGIANVNDETSDRTGLRIVVELKKGTPAQVVLNHLFAKTPLQSSFNVINLALVEGRPRMLTLKDLVRYFVEHRVDVVTRRAHFELRKAQERIHLVRALIRALDAIDKIITLIRHSQNTELAKQRLREQFDFDNVQAQAIVDMQMKRLTGLEVESLRTELKDLTELISSLEELLTSPQKVLGVVKKETRDIADMFGDDRRTDIVSNEIEYLDVEDFIQKEEMVILISHLGYIKRVPVSAYRNQNRGGKGSSSANLAAHDFISQIFTASTHDYVMFVTSRGRAYWLKVYGIPESGRANRGSHIKSLLMVATDEEITAIVSLREFSNKSYVFMATARGVVKKVTTDNFVNAKTRGIIALKLSGGDTLVSAVLVQDEDEVMLITRQGKALRMSGREVREMGRNSSGVIGIKLTSEDLVAGVLRVSEQRKVLIMTENGYGKRVSFSEFSVHGRGTAGQKIYTQTDRKGAIIGALAVLDTDECMCITGQGKTIRVDVCAISVLGRGAQGVRVLDIEPSDLVVGLSCVMQG.

In terms of domain architecture, Topo IIA-type catalytic spans 38-504 (LPDVRDGLKP…EIEYLDVEDF (467 aa)). Tyrosine 126 (O-(5'-phospho-DNA)-tyrosine intermediate) is an active-site residue. Residues 531-537 (QNRGGKG) carry the GyrA-box motif.

Belongs to the type II topoisomerase GyrA/ParC subunit family. In terms of assembly, heterotetramer, composed of two GyrA and two GyrB chains. In the heterotetramer, GyrA contains the active site tyrosine that forms a transient covalent intermediate with DNA, while GyrB binds cofactors and catalyzes ATP hydrolysis.

It localises to the cytoplasm. The catalysed reaction is ATP-dependent breakage, passage and rejoining of double-stranded DNA.. A type II topoisomerase that negatively supercoils closed circular double-stranded (ds) DNA in an ATP-dependent manner to modulate DNA topology and maintain chromosomes in an underwound state. Negative supercoiling favors strand separation, and DNA replication, transcription, recombination and repair, all of which involve strand separation. Also able to catalyze the interconversion of other topological isomers of dsDNA rings, including catenanes and knotted rings. Type II topoisomerases break and join 2 DNA strands simultaneously in an ATP-dependent manner. The polypeptide is DNA gyrase subunit A (Treponema pallidum (strain Nichols)).